Consider the following 147-residue polypeptide: 3-dehydroquinate dehydratase (147 aa).

Tyr-25 serves as the catalytic Proton acceptor. Asn-76, His-82, and Asp-89 together coordinate substrate. Catalysis depends on His-102, which acts as the Proton donor. Substrate is bound by residues 103–104 (LS) and Arg-113.

It belongs to the type-II 3-dehydroquinase family. Homododecamer.

The catalysed reaction is 3-dehydroquinate = 3-dehydroshikimate + H2O. The protein operates within metabolic intermediate biosynthesis; chorismate biosynthesis; chorismate from D-erythrose 4-phosphate and phosphoenolpyruvate: step 3/7. In terms of biological role, catalyzes a trans-dehydration via an enolate intermediate. In Nostoc sp. (strain PCC 7120 / SAG 25.82 / UTEX 2576), this protein is 3-dehydroquinate dehydratase.